Consider the following 374-residue polypeptide: Alcohol dehydrogenase 1 (374 aa).

S1 bears the N-acetylserine mark. C46, H67, C97, C100, C103, C111, and C174 together coordinate Zn(2+). NAD(+)-binding positions include 199–204, D223, K228, 292–294, and R369; these read GLGGVG and VGV.

It belongs to the zinc-containing alcohol dehydrogenase family. Class-I subfamily. Zn(2+) is required as a cofactor.

The protein localises to the cytoplasm. It carries out the reaction a primary alcohol + NAD(+) = an aldehyde + NADH + H(+). It catalyses the reaction a secondary alcohol + NAD(+) = a ketone + NADH + H(+). The sequence is that of Alcohol dehydrogenase 1 from Alligator mississippiensis (American alligator).